The primary structure comprises 512 residues: Flavonoid 3'-monooxygenase (512 aa).

Residues 1–21 (MEILSLILYTVIFSFLLQFIL) form a helical membrane-spanning segment. At 22–512 (RSFFRKRYPL…PRLEAQAYIG (491 aa)) the chain is on the cytoplasmic side. Cys447 lines the heme pocket.

The protein belongs to the cytochrome P450 family. It depends on heme as a cofactor. In terms of tissue distribution, high expression in petals and ovaries and to a lower extent in sepals, pedicels, anthers and stems. Not detected in leaves, style or roots.

It localises to the endoplasmic reticulum membrane. The enzyme catalyses a 3'-unsubstituted flavone + reduced [NADPH--hemoprotein reductase] + O2 = a 3'-hydroxyflavone + oxidized [NADPH--hemoprotein reductase] + H2O + H(+). It participates in secondary metabolite biosynthesis; flavonoid biosynthesis. Functionally, catalyzes the 3'-hydroxylation of the flavonoid B-ring to the 3',4'-hydroxylated state. Convert naringenin to eriodictyol and dihydrokaempferol to dihydroquercetin. This is Flavonoid 3'-monooxygenase (CYP75B2) from Petunia hybrida (Petunia).